The primary structure comprises 211 residues: Peroxiredoxin (211 aa).

Residues 2–156 (PLLGDDFPEL…ILRAVKVLQI (155 aa)) form the Thioredoxin domain. Catalysis depends on cysteine 44, which acts as the Cysteine sulfenic acid (-SOH) intermediate. Arginine 119 serves as a coordination point for substrate. Cysteine 199 and cysteine 205 are disulfide-bonded.

This sequence belongs to the peroxiredoxin family. Prx6 subfamily. Homodecamer. Pentamer of dimers that assemble into a ring structure.

It is found in the cytoplasm. It catalyses the reaction a hydroperoxide + [thioredoxin]-dithiol = an alcohol + [thioredoxin]-disulfide + H2O. Thiol-specific peroxidase that catalyzes the reduction of hydrogen peroxide and organic hydroperoxides to water and alcohols, respectively. Plays a role in cell protection against oxidative stress by detoxifying peroxides. This chain is Peroxiredoxin, found in Chlorobaculum tepidum (strain ATCC 49652 / DSM 12025 / NBRC 103806 / TLS) (Chlorobium tepidum).